We begin with the raw amino-acid sequence, 80 residues long: Tripartite terminase subunit 2 (80 aa).

Belongs to the herpesviridae TRM2 protein family. Associates with TRM1 and TRM3 to form the tripartite terminase complex.

It localises to the host nucleus. Component of the molecular motor that translocates viral genomic DNA in empty capsid during DNA packaging. Forms a tripartite terminase complex together with TRM1 and TRM3 in the host cytoplasm. Once the complex reaches the host nucleus, it interacts with the capsid portal vertex. This portal forms a ring in which genomic DNA is translocated into the capsid. This Homo sapiens (Human) protein is Tripartite terminase subunit 2.